The following is a 111-amino-acid chain: Small ribosomal subunit protein uS10 (111 aa).

The protein belongs to the universal ribosomal protein uS10 family. As to quaternary structure, part of the 30S ribosomal subunit.

Its function is as follows. Involved in the binding of tRNA to the ribosomes. In Ehrlichia ruminantium (strain Welgevonden), this protein is Small ribosomal subunit protein uS10.